The sequence spans 247 residues: Adenosylcobinamide-GDP ribazoletransferase (247 aa).

The next 5 membrane-spanning stretches (helical) occupy residues 34–54 (IITF…VFMV), 59–79 (CGVP…TGGF), 113–133 (GGLA…ELAL), 138–158 (ILAS…LLMY), and 194–214 (VLLP…AIFI).

It belongs to the CobS family. Requires Mg(2+) as cofactor.

The protein resides in the cell inner membrane. It catalyses the reaction alpha-ribazole + adenosylcob(III)inamide-GDP = adenosylcob(III)alamin + GMP + H(+). It carries out the reaction alpha-ribazole 5'-phosphate + adenosylcob(III)inamide-GDP = adenosylcob(III)alamin 5'-phosphate + GMP + H(+). It participates in cofactor biosynthesis; adenosylcobalamin biosynthesis; adenosylcobalamin from cob(II)yrinate a,c-diamide: step 7/7. In terms of biological role, joins adenosylcobinamide-GDP and alpha-ribazole to generate adenosylcobalamin (Ado-cobalamin). Also synthesizes adenosylcobalamin 5'-phosphate from adenosylcobinamide-GDP and alpha-ribazole 5'-phosphate. This Shigella dysenteriae serotype 1 (strain Sd197) protein is Adenosylcobinamide-GDP ribazoletransferase.